Here is a 151-residue protein sequence, read N- to C-terminus: Urease accessory protein UreE (151 aa).

It belongs to the UreE family.

The protein localises to the cytoplasm. In terms of biological role, involved in urease metallocenter assembly. Binds nickel. Probably functions as a nickel donor during metallocenter assembly. The protein is Urease accessory protein UreE of Bacillus cereus (strain ATCC 10987 / NRS 248).